A 375-amino-acid polypeptide reads, in one-letter code: 23S rRNA (uracil(747)-C(5))-methyltransferase RlmC (375 aa).

[4Fe-4S] cluster contacts are provided by Cys3, Cys11, Cys14, and Cys87. S-adenosyl-L-methionine contacts are provided by Gln212, Phe241, Glu262, and Asn307. The Nucleophile role is filled by Cys334.

This sequence belongs to the class I-like SAM-binding methyltransferase superfamily. RNA M5U methyltransferase family. RlmC subfamily.

The enzyme catalyses uridine(747) in 23S rRNA + S-adenosyl-L-methionine = 5-methyluridine(747) in 23S rRNA + S-adenosyl-L-homocysteine + H(+). Its function is as follows. Catalyzes the formation of 5-methyl-uridine at position 747 (m5U747) in 23S rRNA. The chain is 23S rRNA (uracil(747)-C(5))-methyltransferase RlmC from Salmonella enteritidis PT4 (strain P125109).